The primary structure comprises 226 residues: Putative ABC transporter ATP-binding protein BQ02700 (226 aa).

An ABC transporter domain is found at 4–225; sequence IKFDKVTQVF…VAIKEYIRRM (222 aa). 35–42 is an ATP binding site; that stretch reads GANGSGKS.

It belongs to the ABC transporter superfamily.

It is found in the cell inner membrane. Functionally, probably part of an ABC transporter complex. Responsible for energy coupling to the transport system. The polypeptide is Putative ABC transporter ATP-binding protein BQ02700 (Bartonella quintana (strain Toulouse) (Rochalimaea quintana)).